A 73-amino-acid chain; its full sequence is uncharacterized protein (73 aa).

The next 2 membrane-spanning stretches (helical) occupy residues 4–24 (LIPV…SPCV) and 51–71 (AGAI…IIAL).

The protein localises to the cell membrane. This is an uncharacterized protein from Escherichia coli O157:H7.